Here is a 515-residue protein sequence, read N- to C-terminus: Maturase K (515 aa).

It belongs to the intron maturase 2 family. MatK subfamily.

The protein localises to the plastid. Its subcellular location is the chloroplast. In terms of biological role, usually encoded in the trnK tRNA gene intron. Probably assists in splicing its own and other chloroplast group II introns. The protein is Maturase K of Trillium pusillum (Dwarf wakerobin).